The primary structure comprises 960 residues: RasGEF domain-containing serine/threonine-protein kinase X (960 aa).

One can recognise a Protein kinase domain in the interval 21 to 274; it reads LEFNEKIGKG…FDEILSQLKV (254 aa). ATP is bound by residues 27–35 and K48; that span reads IGKGSFGSV. Catalysis depends on D140, which acts as the Proton acceptor. Low complexity predominate over residues 314-368; it reads NISFSPNNSNNNNNNNNNISNISPDITTGIQQINLSSSGGSNNSSPSTPPQGSQL. 2 disordered regions span residues 314 to 372 and 393 to 413; these read NISF…VSLA and GQLSTTPPPTSPIQSRPHKPS. In terms of domain architecture, N-terminal Ras-GEF spans 437-565; that stretch reads PCYAALTSHI…LGTTISNNEL (129 aa). The interval 596–651 is disordered; sequence NNNNNNNNNPVNNINNINNNNSVNSSSSNNNNNNNNNNSNNNNNNNNNNNNNNNNN. The 246-residue stretch at 712–957 folds into the Ras-GEF domain; that stretch reads HSTELARQIT…KNNSLKCEPP (246 aa).

This sequence belongs to the protein kinase superfamily. TKL Ser/Thr protein kinase family.

It catalyses the reaction L-seryl-[protein] + ATP = O-phospho-L-seryl-[protein] + ADP + H(+). The catalysed reaction is L-threonyl-[protein] + ATP = O-phospho-L-threonyl-[protein] + ADP + H(+). Functionally, promotes the exchange of Ras-bound GDP by GTP. This chain is RasGEF domain-containing serine/threonine-protein kinase X (gefX), found in Dictyostelium discoideum (Social amoeba).